The following is a 181-amino-acid chain: Large ribosomal subunit protein uL6 (181 aa).

It belongs to the universal ribosomal protein uL6 family. In terms of assembly, part of the 50S ribosomal subunit.

Functionally, this protein binds to the 23S rRNA, and is important in its secondary structure. It is located near the subunit interface in the base of the L7/L12 stalk, and near the tRNA binding site of the peptidyltransferase center. This is Large ribosomal subunit protein uL6 from Hydrogenobaculum sp. (strain Y04AAS1).